The primary structure comprises 252 residues: Probable phosphatase SO_1652 (252 aa).

Zn(2+)-binding residues include histidine 8, histidine 10, histidine 16, histidine 41, glutamate 74, histidine 102, histidine 132, aspartate 193, and histidine 195.

Belongs to the PHP family. The cofactor is Zn(2+).

The chain is Probable phosphatase SO_1652 from Shewanella oneidensis (strain ATCC 700550 / JCM 31522 / CIP 106686 / LMG 19005 / NCIMB 14063 / MR-1).